Reading from the N-terminus, the 194-residue chain is Small ribosomal subunit protein uS7 (194 aa).

The protein belongs to the universal ribosomal protein uS7 family. In terms of assembly, part of the 30S ribosomal subunit.

One of the primary rRNA binding proteins, it binds directly to 16S rRNA where it nucleates assembly of the head domain of the 30S subunit. Is located at the subunit interface close to the decoding center. This chain is Small ribosomal subunit protein uS7, found in Methanospirillum hungatei JF-1 (strain ATCC 27890 / DSM 864 / NBRC 100397 / JF-1).